A 503-amino-acid chain; its full sequence is Cytochrome P450 7A1 (503 aa).

The chain crosses the membrane as a helical span at residues 4–24 (ISLIWGIAVVVSCCIWFIIGI). Cys444 contributes to the heme binding site.

It belongs to the cytochrome P450 family. The cofactor is heme.

Its subcellular location is the endoplasmic reticulum membrane. The protein resides in the microsome membrane. It catalyses the reaction cholesterol + reduced [NADPH--hemoprotein reductase] + O2 = 7alpha-hydroxycholesterol + oxidized [NADPH--hemoprotein reductase] + H2O + H(+). The enzyme catalyses 4beta-hydroxycholesterol + reduced [NADPH--hemoprotein reductase] + O2 = 4beta,7alpha-dihydroxycholesterol + oxidized [NADPH--hemoprotein reductase] + H2O + H(+). The catalysed reaction is lathosterol + reduced [NADPH--hemoprotein reductase] + O2 = 7alpha,8alpha-epoxy-5alpha-cholestan-3beta-ol + oxidized [NADPH--hemoprotein reductase] + H2O + H(+). It carries out the reaction lathosterol + reduced [NADPH--hemoprotein reductase] + O2 = 5alpha-cholestan-7-oxo-3beta-ol + oxidized [NADPH--hemoprotein reductase] + H2O + H(+). It catalyses the reaction 7-dehydrocholesterol + reduced [NADPH--hemoprotein reductase] + O2 = 7-oxocholesterol + oxidized [NADPH--hemoprotein reductase] + H2O + H(+). The enzyme catalyses (24S)-hydroxycholesterol + reduced [NADPH--hemoprotein reductase] + O2 = (24S)-7alpha-dihydroxycholesterol + oxidized [NADPH--hemoprotein reductase] + H2O + H(+). The catalysed reaction is (24R)-hydroxycholesterol + reduced [NADPH--hemoprotein reductase] + O2 = (24R)-7alpha-dihydroxycholesterol + oxidized [NADPH--hemoprotein reductase] + H2O + H(+). It participates in lipid metabolism; bile acid biosynthesis. Its pathway is steroid metabolism; cholesterol degradation. A cytochrome P450 monooxygenase involved in the metabolism of endogenous cholesterol and its oxygenated derivatives (oxysterols). Mechanistically, uses molecular oxygen inserting one oxygen atom into a substrate, and reducing the second into a water molecule, with two electrons provided by NADPH via cytochrome P450 reductase (CPR; NADPH-ferrihemoprotein reductase). Functions as a critical regulatory enzyme of bile acid biosynthesis and cholesterol homeostasis. Catalyzes the hydroxylation of carbon hydrogen bond at 7-alpha position of cholesterol, a rate-limiting step in cholesterol catabolism and bile acid biosynthesis. 7-alpha hydroxylates several oxysterols, including 4beta-hydroxycholesterol and 24-hydroxycholesterol. Catalyzes the oxidation of the 7,8 double bond of 7-dehydrocholesterol and lathosterol with direct and predominant formation of the 7-keto derivatives. The polypeptide is Cytochrome P450 7A1 (Mus musculus (Mouse)).